We begin with the raw amino-acid sequence, 653 residues long: UvrABC system protein C (653 aa).

One can recognise a GIY-YIG domain in the interval 44-122; it reads NAPGVYRMVN…IKRLRPRFNV (79 aa). In terms of domain architecture, UVR spans 232-267; it reads STVKAEIATAMQEASQALDFERAAIYRDRLAALSHV.

Belongs to the UvrC family. In terms of assembly, interacts with UvrB in an incision complex.

It localises to the cytoplasm. In terms of biological role, the UvrABC repair system catalyzes the recognition and processing of DNA lesions. UvrC both incises the 5' and 3' sides of the lesion. The N-terminal half is responsible for the 3' incision and the C-terminal half is responsible for the 5' incision. The protein is UvrABC system protein C of Chelativorans sp. (strain BNC1).